The chain runs to 498 residues: ATP synthase subunit beta, chloroplastic (498 aa).

172–179 (GGAGVGKT) contributes to the ATP binding site.

This sequence belongs to the ATPase alpha/beta chains family. As to quaternary structure, F-type ATPases have 2 components, CF(1) - the catalytic core - and CF(0) - the membrane proton channel. CF(1) has five subunits: alpha(3), beta(3), gamma(1), delta(1), epsilon(1). CF(0) has four main subunits: a(1), b(1), b'(1) and c(9-12).

The protein resides in the plastid. It localises to the chloroplast thylakoid membrane. It carries out the reaction ATP + H2O + 4 H(+)(in) = ADP + phosphate + 5 H(+)(out). Its function is as follows. Produces ATP from ADP in the presence of a proton gradient across the membrane. The catalytic sites are hosted primarily by the beta subunits. The polypeptide is ATP synthase subunit beta, chloroplastic (Pelargonium hortorum (Common geranium)).